The sequence spans 203 residues: uncharacterized protein (203 aa).

Residues 180 to 200 (VYLLLFGIPLLILIFLIIFFI) form a helical membrane-spanning segment.

The protein localises to the virion. Its subcellular location is the host membrane. This is an uncharacterized protein from Acanthamoeba polyphaga (Amoeba).